A 132-amino-acid polypeptide reads, in one-letter code: mRNA interferase toxin YafO (132 aa).

Probably forms a complex with the antitoxin YafN which inhibits the mRNA interferase activity.

Toxic component of a type II toxin-antitoxin (TA) system. A translation-dependent mRNA interferase. Overexpression causes cessation of cell growth and inhibits cell proliferation via inhibition of translation; this blockage is overcome by subsequent expression of antitoxin YafN. Overexpression causes cleavage of a number of mRNAs in a ribosome-dependent fashion. YafO binding to the 50S ribosomal subunit in the translation complex induces mRNA cleavage 3' to the region protected by the ribosome; YafO alone is not able to digest mRNA. This Escherichia coli (strain K12) protein is mRNA interferase toxin YafO (yafO).